An 809-amino-acid chain; its full sequence is Endoplasmin homolog (809 aa).

A signal peptide spans 1–18; the sequence is MRKWALSCALLLVLLLTT. Asn-111, Asp-155, Asn-168, and Phe-200 together coordinate ATP. The N-linked (GlcNAc...) asparagine glycan is linked to Asn-111. Positions 293-320 are enriched in acidic residues; it reads VPADEEESNEEEESTTETTEEEETEDDE. The segment at 293–329 is disordered; that stretch reads VPADEEESNEEEESTTETTEEEETEDDEEKKPKTKTV. 3 N-linked (GlcNAc...) asparagine glycosylation sites follow: Asn-410, Asn-450, and Asn-617. Residues 766–809 are disordered; that stretch reads SLDLSPDAAVEEEEEVEEPEVEEKESAKQEAEEPEHEQYDKDEL. Residues 774 to 788 are compositionally biased toward acidic residues; it reads AVEEEEEVEEPEVEE. Basic and acidic residues predominate over residues 789–809; sequence KESAKQEAEEPEHEQYDKDEL. Positions 806–809 match the Prevents secretion from ER motif; it reads KDEL.

This sequence belongs to the heat shock protein 90 family.

Its subcellular location is the endoplasmic reticulum lumen. Functionally, may have a molecular chaperone role in the processing of secreted materials. In Hordeum vulgare (Barley), this protein is Endoplasmin homolog.